Reading from the N-terminus, the 262-residue chain is Transmembrane protein 106A (262 aa).

The helical transmembrane segment at 95–115 threads the bilayer; it reads FVFLAVLICLVTSSFIVFFLF.

The protein belongs to the TMEM106 family. Expressed in renal cells (at protein level). Expressed in epithelial cells.

Its subcellular location is the cell membrane. Activates macrophages and polarizes them into M1-like macrophages through the activation of the MAPK and NF-kappaB signaling pathway. Upon activation, up-regulates the expression of CD80, CD86, CD69 and MHC II on macrophages, and induces the release of pro-inflammatory cytokines such as TNF, IL1B, IL6, CCL2 and nitric oxide. May play a role in inhibition of proliferation and migration. This is Transmembrane protein 106A (TMEM106A) from Homo sapiens (Human).